Here is a 115-residue protein sequence, read N- to C-terminus: NADH-ubiquinone oxidoreductase chain 3 (115 aa).

The next 3 membrane-spanning stretches (helical) occupy residues 4-24 (LMVL…AFWL), 55-75 (FFLV…LLPL), and 84-104 (INIM…GLAY).

Belongs to the complex I subunit 3 family. In terms of assembly, core subunit of respiratory chain NADH dehydrogenase (Complex I) which is composed of 45 different subunits. Interacts with TMEM186. Interacts with TMEM242.

It is found in the mitochondrion membrane. The catalysed reaction is a ubiquinone + NADH + 5 H(+)(in) = a ubiquinol + NAD(+) + 4 H(+)(out). Core subunit of the mitochondrial membrane respiratory chain NADH dehydrogenase (Complex I) that is believed to belong to the minimal assembly required for catalysis. Complex I functions in the transfer of electrons from NADH to the respiratory chain. The immediate electron acceptor for the enzyme is believed to be ubiquinone. The protein is NADH-ubiquinone oxidoreductase chain 3 of Onychomys leucogaster (Northern grasshopper mouse).